Reading from the N-terminus, the 160-residue chain is SsrA-binding protein (160 aa).

The disordered stretch occupies residues 131-160 (KKEYDKRHTERERDSDRELQRAVRSKGKDD).

It belongs to the SmpB family.

Its subcellular location is the cytoplasm. Functionally, required for rescue of stalled ribosomes mediated by trans-translation. Binds to transfer-messenger RNA (tmRNA), required for stable association of tmRNA with ribosomes. tmRNA and SmpB together mimic tRNA shape, replacing the anticodon stem-loop with SmpB. tmRNA is encoded by the ssrA gene; the 2 termini fold to resemble tRNA(Ala) and it encodes a 'tag peptide', a short internal open reading frame. During trans-translation Ala-aminoacylated tmRNA acts like a tRNA, entering the A-site of stalled ribosomes, displacing the stalled mRNA. The ribosome then switches to translate the ORF on the tmRNA; the nascent peptide is terminated with the 'tag peptide' encoded by the tmRNA and targeted for degradation. The ribosome is freed to recommence translation, which seems to be the essential function of trans-translation. The polypeptide is SsrA-binding protein (Pseudomonas syringae pv. syringae (strain B728a)).